We begin with the raw amino-acid sequence, 34 residues long: Photosystem II reaction center protein M (34 aa).

A helical membrane pass occupies residues 5–25; that stretch reads ILAFIATVLFILVPTAFLLII.

It belongs to the PsbM family. PSII is composed of 1 copy each of membrane proteins PsbA, PsbB, PsbC, PsbD, PsbE, PsbF, PsbH, PsbI, PsbJ, PsbK, PsbL, PsbM, PsbT, PsbX, PsbY, PsbZ, Psb30/Ycf12, at least 3 peripheral proteins of the oxygen-evolving complex and a large number of cofactors. It forms dimeric complexes.

It localises to the plastid. It is found in the chloroplast thylakoid membrane. One of the components of the core complex of photosystem II (PSII). PSII is a light-driven water:plastoquinone oxidoreductase that uses light energy to abstract electrons from H(2)O, generating O(2) and a proton gradient subsequently used for ATP formation. It consists of a core antenna complex that captures photons, and an electron transfer chain that converts photonic excitation into a charge separation. This subunit is found at the monomer-monomer interface. The polypeptide is Photosystem II reaction center protein M (Piper cenocladum (Ant piper)).